A 230-amino-acid chain; its full sequence is Ureidoacrylate amidohydrolase RutB (230 aa).

The active-site Proton acceptor is the aspartate 24. Lysine 133 is an active-site residue. Cysteine 166 (nucleophile) is an active-site residue.

Belongs to the isochorismatase family. RutB subfamily.

It catalyses the reaction (Z)-3-ureidoacrylate + H2O + H(+) = (Z)-3-aminoacrylate + NH4(+) + CO2. It carries out the reaction (Z)-3-ureidoacrylate + H2O = (Z)-3-aminoacrylate + carbamate + H(+). The catalysed reaction is (Z)-2-methylureidoacrylate + H2O + H(+) = (Z)-2-methylaminoacrylate + NH4(+) + CO2. Functionally, hydrolyzes ureidoacrylate to form aminoacrylate and carbamate. The carbamate hydrolyzes spontaneously, thereby releasing one of the nitrogen atoms of the pyrimidine ring as ammonia and one of its carbon atoms as CO2. The chain is Ureidoacrylate amidohydrolase RutB from Escherichia coli O44:H18 (strain 042 / EAEC).